The primary structure comprises 1016 residues: Formate dehydrogenase-O major subunit (1016 aa).

Residues 1–33 (MQVSRRQFFKICAGGMAGTTAAALGFAPSVALA) constitute a signal peptide (tat-type signal). The 64-residue stretch at 43 to 106 (TRETRNTCTY…GLVDFIHSES (64 aa)) folds into the 4Fe-4S Mo/W bis-MGD-type domain. Residues C50, C53, C57, and C92 each coordinate [4Fe-4S] cluster. Position 196 (U196) is a non-standard amino acid, selenocysteine.

The protein belongs to the prokaryotic molybdopterin-containing oxidoreductase family. As to quaternary structure, formate dehydrogenase is a membrane-bound complex, formed by subunits alpha, beta and gamma. Mo-bis(molybdopterin guanine dinucleotide) serves as cofactor. It depends on [4Fe-4S] cluster as a cofactor. Exported by the Tat system. The position of the signal peptide cleavage has not been experimentally proven.

It localises to the periplasm. It catalyses the reaction formate + NAD(+) = CO2 + NADH. Functionally, allows to use formate as major electron donor during aerobic respiration. Subunit alpha possibly forms the active site. The protein is Formate dehydrogenase-O major subunit (fdoG) of Escherichia coli (strain K12).